The chain runs to 430 residues: KICSTOR complex protein kaptin (430 aa).

Positions 410–430 (RKHQQGLGDRVGPRPVEHPAS) are disordered. Basic and acidic residues predominate over residues 420 to 430 (VGPRPVEHPAS).

As to quaternary structure, part of the KICSTOR complex composed of KPTN, ITFG2, KICS2 and SZT2. SZT2 probably serves as a link between the other three proteins in the KICSTOR complex and mediates the direct interaction with the GATOR1 complex. May associate with F-actin filaments.

Its subcellular location is the lysosome membrane. The protein localises to the cell projection. The protein resides in the lamellipodium. It is found in the stereocilium. In terms of biological role, as part of the KICSTOR complex functions in the amino acid-sensing branch of the TORC1 signaling pathway. Recruits, in an amino acid-independent manner, the GATOR1 complex to the lysosomal membranes and allows its interaction with GATOR2 and the RAG GTPases. Functions upstream of the RAG GTPases and is required to negatively regulate mTORC1 signaling in absence of amino acids. In absence of the KICSTOR complex mTORC1 is constitutively localized to the lysosome and activated. The KICSTOR complex is also probably involved in the regulation of mTORC1 by glucose. The polypeptide is KICSTOR complex protein kaptin (Mus musculus (Mouse)).